The following is a 257-amino-acid chain: Tryptophan synthase alpha chain (257 aa).

Residues Glu-47 and Asp-58 each act as proton acceptor in the active site.

This sequence belongs to the TrpA family. Tetramer of two alpha and two beta chains.

It catalyses the reaction (1S,2R)-1-C-(indol-3-yl)glycerol 3-phosphate + L-serine = D-glyceraldehyde 3-phosphate + L-tryptophan + H2O. It functions in the pathway amino-acid biosynthesis; L-tryptophan biosynthesis; L-tryptophan from chorismate: step 5/5. Functionally, the alpha subunit is responsible for the aldol cleavage of indoleglycerol phosphate to indole and glyceraldehyde 3-phosphate. This chain is Tryptophan synthase alpha chain, found in Listeria monocytogenes serotype 4b (strain F2365).